Here is a 308-residue protein sequence, read N- to C-terminus: 3'(2'),5'-bisphosphate nucleotidase 1 (308 aa).

Ala-2 bears the N-acetylalanine mark. Asp-51 functions as the Proton acceptor in the catalytic mechanism. Positions 74, 117, 119, and 120 each coordinate Mg(2+). The active-site Proton acceptor is the Thr-122. A Phosphothreonine modification is found at Thr-122. AMP contacts are provided by Thr-195, His-198, Gly-220, and Lys-224. At Ser-240 the chain carries Phosphoserine. At Lys-244 the chain carries N6-succinyllysine. Residue Asp-247 coordinates Mg(2+).

Belongs to the inositol monophosphatase superfamily. The cofactor is Mg(2+). As to expression, highly expressed in heart, brain, spleen, lung, liver, skeletal muscle, kidney and testis.

It carries out the reaction adenosine 3',5'-bisphosphate + H2O = AMP + phosphate. The catalysed reaction is adenosine 2',5'-bisphosphate + H2O = AMP + phosphate. It catalyses the reaction 3'-phosphoadenylyl sulfate + H2O = adenosine 5'-phosphosulfate + phosphate. The enzyme catalyses 1D-myo-inositol 1,4-bisphosphate + H2O = 1D-myo-inositol 4-phosphate + phosphate. It carries out the reaction 1D-myo-inositol 1,3,4-trisphosphate + H2O = 1D-myo-inositol 3,4-bisphosphate + phosphate. Inhibited by Li(+) and Ca(2+), but not by Na(+). Its function is as follows. Phosphatase that converts 3'(2')-phosphoadenosine 5'-phosphate (PAP) to AMP and adenosine 3'-phosphate 5'-phosphosulfate (PAPS) to adenosine 5'-phosphosulfate (APS). Is also able to hydrolyze inositol 1,4-bisphosphate (Ins(1,4)P2) and inositol 1,3,4-trisphosphate (Ins(1,3,4)P3), but is not active on AMP, 3'-AMP, fructose-1,6-bisphosphate, Ins(1)P, Ins(2)P and Ins(1,4,5)P3. Probably prevents the toxic accumulation of PAP, a compound which inhibits a variety of proteins, including PAPS-utilizing enzymes such as sulfotransferases, and RNA processing enzymes. Could also play a role in inositol recycling and phosphoinositide metabolism. This Rattus norvegicus (Rat) protein is 3'(2'),5'-bisphosphate nucleotidase 1 (Bpnt1).